An 811-amino-acid chain; its full sequence is Probable glutamine--tRNA ligase (811 aa).

The tract at residues 190-217 (DAAAGKKKGAKAKNSKQKTVDSGKAKEQ) is disordered. A compositionally biased stretch (basic residues) spans 194–205 (GKKKGAKAKNSK). Residues 207-217 (KTVDSGKAKEQ) show a composition bias toward basic and acidic residues. The short motif at 269–279 (PEPNGYLHIGH) is the 'HIGH' region element. Residues 270 to 272 (EPN) and 276 to 282 (HIGHSKA) contribute to the ATP site. D302 and Y447 together coordinate L-glutamine. ATP-binding positions include T466, 495–496 (RL), and 503–505 (MSK). The short motif at 502 to 506 (LMSKR) is the 'KMSKS' region element.

The protein belongs to the class-I aminoacyl-tRNA synthetase family.

It localises to the cytoplasm. It carries out the reaction tRNA(Gln) + L-glutamine + ATP = L-glutaminyl-tRNA(Gln) + AMP + diphosphate. The polypeptide is Probable glutamine--tRNA ligase (qrs1) (Schizosaccharomyces pombe (strain 972 / ATCC 24843) (Fission yeast)).